A 229-amino-acid polypeptide reads, in one-letter code: Peptidase E (229 aa).

Catalysis depends on charge relay system residues Ser-120, Asp-135, and His-157.

It belongs to the peptidase S51 family.

The protein localises to the cytoplasm. It catalyses the reaction Dipeptidase E catalyzes the hydrolysis of dipeptides Asp-|-Xaa. It does not act on peptides with N-terminal Glu, Asn or Gln, nor does it cleave isoaspartyl peptides.. Its function is as follows. Hydrolyzes dipeptides containing N-terminal aspartate residues. May play a role in allowing the cell to use peptide aspartate to spare carbon otherwise required for the synthesis of the aspartate family of amino acids. This Salmonella typhimurium (strain LT2 / SGSC1412 / ATCC 700720) protein is Peptidase E (pepE).